The chain runs to 159 residues: Small ribosomal subunit protein uS9 (159 aa).

Belongs to the universal ribosomal protein uS9 family.

In Rickettsia africae (strain ESF-5), this protein is Small ribosomal subunit protein uS9.